Consider the following 156-residue polypeptide: Small ribosomal subunit protein uS7 (156 aa).

This sequence belongs to the universal ribosomal protein uS7 family. As to quaternary structure, part of the 30S ribosomal subunit. Contacts proteins S9 and S11.

In terms of biological role, one of the primary rRNA binding proteins, it binds directly to 16S rRNA where it nucleates assembly of the head domain of the 30S subunit. Is located at the subunit interface close to the decoding center, probably blocks exit of the E-site tRNA. This is Small ribosomal subunit protein uS7 from Shewanella sp. (strain ANA-3).